We begin with the raw amino-acid sequence, 455 residues long: Oxysterols receptor LXR-beta (455 aa).

The segment covering 1-10 has biased composition (polar residues); sequence MSTPTTNSVD. The segment at 1-53 is disordered; sequence MSTPTTNSVDTPLPGNGPSTPSSSPGGKEDGPEPCPGGADPDVPSTDGADSAS. The segment at 1–80 is transactivation AF-1; required for ligand-independent transactivation function; it reads MSTPTTNSVD…GPAPKMLGDE (80 aa). Over residues 14–26 the composition is skewed to low complexity; that stretch reads PGNGPSTPSSSPG. Residues 79 to 156 constitute a DNA-binding region (nuclear receptor); that stretch reads DELCQVCGDT…AGMREQCVLS (78 aa). NR C4-type zinc fingers lie at residues 82 to 102 and 120 to 144; these read CQVCGDTASGFHYNVLSCEGC and CRGGGTCQMDAFMRRKCQQCRLRKC. The segment at 164–210 is disordered; it reads KIRKQQQQQQQQSSPTGPGVSSSSPASGPGASPGGSDGGGQGSGEGE. Residues 168–193 show a composition bias toward low complexity; it reads QQQQQQQQSSPTGPGVSSSSPASGPG. The span at 194–210 shows a compositional bias: gly residues; the sequence is ASPGGSDGGGQGSGEGE. Residues 214-455 are transactivation AF-2; required for ligand-dependent transactivation function; mediates interaction with CCAR2; that stretch reads LTAAQELMIQ…LLSEIWDVHE (242 aa). Residues 217-455 form the NR LBD domain; that stretch reads AQELMIQQLV…LLSEIWDVHE (239 aa). Glycyl lysine isopeptide (Lys-Gly) (interchain with G-Cter in SUMO2) cross-links involve residues lysine 404 and lysine 442.

Belongs to the nuclear hormone receptor family. NR1 subfamily. As to quaternary structure, forms a heterodimer with RXR. Interacts with CCAR2 (via N-terminus) in a ligand-independent manner. Interacts (when sumoylated) with GPS2; interaction with GPS2 onto hepatic acute phase protein promoters prevents N-Cor corepressor complex dissociation. Interacts with ABCA12 and ABCA1; this interaction is required for ABCA1 localization to the cell surface and is necessary for its normal activity and stability. Sumoylated by SUMO2 at Lys-404 and Lys-442 during the hepatic acute phase response, leading to promote interaction with GPS2 and prevent N-Cor corepressor complex dissociation.

The protein localises to the nucleus. In terms of biological role, nuclear receptor that exhibits a ligand-dependent transcriptional activation activity. Binds preferentially to double-stranded oligonucleotide direct repeats having the consensus half-site sequence 5'-AGGTCA-3' and 4-nt spacing (DR-4). Regulates cholesterol uptake through MYLIP-dependent ubiquitination of LDLR, VLDLR and LRP8; DLDLR and LRP8. Interplays functionally with RORA for the regulation of genes involved in liver metabolism. Induces LPCAT3-dependent phospholipid remodeling in endoplasmic reticulum (ER) membranes of hepatocytes, driving SREBF1 processing and lipogenesis. Via LPCAT3, triggers the incorporation of arachidonate into phosphatidylcholines of ER membranes, increasing membrane dynamics and enabling triacylglycerols transfer to nascent very low-density lipoprotein (VLDL) particles. Via LPCAT3 also counteracts lipid-induced ER stress response and inflammation, likely by modulating SRC kinase membrane compartmentalization and limiting the synthesis of lipid inflammatory mediators. Plays an anti-inflammatory role during the hepatic acute phase response by acting as a corepressor: inhibits the hepatic acute phase response by preventing dissociation of the N-Cor corepressor complex. The chain is Oxysterols receptor LXR-beta (NR1H2) from Bos taurus (Bovine).